We begin with the raw amino-acid sequence, 77 residues long: Acyl carrier protein (77 aa).

Residues 2-77 (ADALERVTKI…DAVNYINSKQ (76 aa)) enclose the Carrier domain. Serine 37 bears the O-(pantetheine 4'-phosphoryl)serine mark.

This sequence belongs to the acyl carrier protein (ACP) family. In terms of processing, 4'-phosphopantetheine is transferred from CoA to a specific serine of apo-ACP by AcpS. This modification is essential for activity because fatty acids are bound in thioester linkage to the sulfhydryl of the prosthetic group.

It is found in the cytoplasm. It functions in the pathway lipid metabolism; fatty acid biosynthesis. Carrier of the growing fatty acid chain in fatty acid biosynthesis. The chain is Acyl carrier protein from Bacillus licheniformis (strain ATCC 14580 / DSM 13 / JCM 2505 / CCUG 7422 / NBRC 12200 / NCIMB 9375 / NCTC 10341 / NRRL NRS-1264 / Gibson 46).